The chain runs to 345 residues: Protein D345L (345 aa).

Belongs to the asfivirus D345L family. Interacts with IKKA/CHUK and IKBKB.

The protein localises to the host cytoplasm. Functionally, plays a role in the negative regulation of host NF-kappa-B signaling pathway. Mechanistically, recruits IKKA/CHUK and IKBKB to suppress their kinase activity towards NFKBIA. The polypeptide is Protein D345L (Ornithodoros (relapsing fever ticks)).